The chain runs to 349 residues: Cdc42 effector protein 4 (349 aa).

Lys-5 is subject to N6-methyllysine. At Ser-18 the chain carries Phosphoserine. A CRIB domain is found at 27-41; that stretch reads ISAPLGDFRHTMHVG. Ser-64, Ser-103, Ser-107, and Ser-116 each carry phosphoserine. Residues 123–132 are compositionally biased toward basic and acidic residues; sequence KEAAEKDSSK. Disordered stretches follow at residues 123-172, 220-240, and 278-349; these read KEAA…LLDE, QWGSEEEEEAGGYRDKEGPSS, and GWAV…EIRV. A phosphoserine mark is found at Ser-136, Ser-138, Ser-140, Ser-154, Ser-165, Ser-223, Ser-285, and Ser-288. Low complexity predominate over residues 280 to 308; it reads AVVAPSPSSARSVGSHTTRDSSSLSSYTS. Residues 311–322 show a composition bias toward basic and acidic residues; sequence LEERSPAFRGPD. Positions 338 to 349 are enriched in acidic residues; the sequence is FMDEEEEDEIRV.

The protein belongs to the BORG/CEP family. In terms of assembly, interacts with CDC42 and RHOQ, in a GTP-dependent manner. As to expression, ubiquitous.

It is found in the endomembrane system. The protein resides in the cytoplasm. The protein localises to the cytoskeleton. In terms of biological role, probably involved in the organization of the actin cytoskeleton. May act downstream of CDC42 to induce actin filament assembly leading to cell shape changes. Induces pseudopodia formation, when overexpressed in fibroblasts. In Mus musculus (Mouse), this protein is Cdc42 effector protein 4 (Cdc42ep4).